The following is a 209-amino-acid chain: Chaperone protein TorD (209 aa).

This sequence belongs to the TorD/DmsD family. TorD subfamily.

The protein resides in the cytoplasm. Involved in the biogenesis of TorA. Acts on TorA before the insertion of the molybdenum cofactor and, as a result, probably favors a conformation of the apoenzyme that is competent for acquiring the cofactor. The protein is Chaperone protein TorD of Shewanella sp. (strain MR-4).